A 222-amino-acid chain; its full sequence is Large ribosomal subunit protein uL4 (222 aa).

Belongs to the universal ribosomal protein uL4 family. In terms of assembly, part of the 50S ribosomal subunit.

Its function is as follows. One of the primary rRNA binding proteins, this protein initially binds near the 5'-end of the 23S rRNA. It is important during the early stages of 50S assembly. It makes multiple contacts with different domains of the 23S rRNA in the assembled 50S subunit and ribosome. Forms part of the polypeptide exit tunnel. This chain is Large ribosomal subunit protein uL4, found in Chlamydia trachomatis serovar L2 (strain ATCC VR-902B / DSM 19102 / 434/Bu).